The sequence spans 238 residues: tRNA (guanine-N(7)-)-methyltransferase (238 aa).

Residues E68, E93, D121, and D143 each coordinate S-adenosyl-L-methionine. The active site involves D143. Substrate contacts are provided by residues K147, D179, and 216 to 219 (TRYE).

This sequence belongs to the class I-like SAM-binding methyltransferase superfamily. TrmB family.

It carries out the reaction guanosine(46) in tRNA + S-adenosyl-L-methionine = N(7)-methylguanosine(46) in tRNA + S-adenosyl-L-homocysteine. Its pathway is tRNA modification; N(7)-methylguanine-tRNA biosynthesis. Catalyzes the formation of N(7)-methylguanine at position 46 (m7G46) in tRNA. The protein is tRNA (guanine-N(7)-)-methyltransferase of Paramagnetospirillum magneticum (strain ATCC 700264 / AMB-1) (Magnetospirillum magneticum).